Consider the following 582-residue polypeptide: MPSWREKHEKIVQSKILVIGAGGIGCELLKNLAVTGFRKVHVIDLDTIDISNLNRQFLFRKEHVSSSKAATATQVVKQFCPQIELTFDHDSIFEKKYNMEFFQAYDIVLNALDNRAARNYVNRMCHAANRPLIDSGSGGYFGQVSVIMRGKTECYECVDKPVQQTTYPGCTIRNTPSEHIHCTVWAKHVFNQLFGEVDIDDDVSPDMDAVDPDNTEAVTTEKEKEAMKEEPAPVGTRQWAESVDYDAAKVFDKLFLHDIEYLCKMEHLWKQRKRPSPLEFHTASSTGGEPQSLCDAQRDDTSIWTLSTCAKVFSTCIQELLEQIRAEPDVKLAFDKDHAIIMSFVAACANIRAKIFGIPMKSQFDIKAMAGNIIPAIASTNAIVAGIIVTEAVRVIEGSTVICNSSIATTQSNPRGRIFGGDATNPPNPRCFVCSEKREVFIYVNPDTMTVGGLCEKVLKQKLNMLAPDVMDSATSRIIVSSDGDTDDLLPKKLAEVSIEDGAILSCDDFQQEMEIKLFIKKGDRLAGDDFEVARSEKEPEPDDRKRKADGSEEPEAKRQKVEEKDDKNGNEAVAEITETMA.

ATP contacts are provided by residues 20-25 (GAGGIG), D44, 52-55 (NLNR), K68, 91-92 (SI), and 113-118 (DNRAAR). Residues C154 and C157 each coordinate Zn(2+). The active-site Glycyl thioester intermediate is C170. Residues 204–214 (SPDMDAVDPDN) show a composition bias toward acidic residues. The disordered stretch occupies residues 204-235 (SPDMDAVDPDNTEAVTTEKEKEAMKEEPAPVG). Residues 219 to 231 (TTEKEKEAMKEEP) are compositionally biased toward basic and acidic residues. Positions 431 and 434 each coordinate Zn(2+). The segment covering 531 to 570 (FEVARSEKEPEPDDRKRKADGSEEPEAKRQKVEEKDDKNG) has biased composition (basic and acidic residues). The segment at 531-582 (FEVARSEKEPEPDDRKRKADGSEEPEAKRQKVEEKDDKNGNEAVAEITETMA) is disordered.

Belongs to the ubiquitin-activating E1 family. Heterodimer with aos-1.

It participates in protein modification; protein sumoylation. Its function is as follows. The dimeric enzyme acts as an E1 ligase for smo-1. It mediates ATP-dependent activation of smo-1 and formation of a thioester with a conserved cysteine residue on uba-2. The polypeptide is SUMO-activating enzyme subunit uba-2 (uba-2) (Caenorhabditis elegans).